A 183-amino-acid chain; its full sequence is CASP-like protein UU2 (183 aa).

Residues 1-33 (MEESQQQSSKFDAPPSPYVPSRVYLAQIYWKKP) lie on the Cytoplasmic side of the membrane. The helical transmembrane segment at 34 to 54 (AIVVLRVLQFIFSLIAFSVMA) threads the bilayer. The Extracellular segment spans residues 55 to 72 (DVLHDVQGSIKSLSYTVA). Residues 73-93 (IGVLACAYALAQLSFSLWCVI) form a helical membrane-spanning segment. At 94 to 118 (RGATSSAGVTPLYQYATFICDQMST) the chain is on the cytoplasmic side. The chain crosses the membrane as a helical span at residues 119–139 (YFLISAASATATLIDVSGVCG). Residues 140–156 (SNGSGTNLCSRSTASVT) are Extracellular-facing. An N-linked (GlcNAc...) asparagine glycan is attached at Asn-141. Residues 157-177 (FAFLAFLAFSASSVLTGYYLV) form a helical membrane-spanning segment. The Cytoplasmic segment spans residues 178-183 (KCILKA).

The protein belongs to the Casparian strip membrane proteins (CASP) family. Homodimer and heterodimers.

It localises to the cell membrane. This is CASP-like protein UU2 from Selaginella moellendorffii (Spikemoss).